Here is a 382-residue protein sequence, read N- to C-terminus: MEVSTSYCTPAVNFKYGSFQDSDVSMREDDLFRMGSYNSQGYYADGTHLDGSIGEEDETSSGSNDQHMDFEEDDFDMESSMTEDLVDEDEEEEDEEDNDEWTNQKRTDNQNSVAYYAAMEMLRIRFPFQSIAIRISDFCCLQEKDLLNDTMIDFYLNHIVEHVLPDSNGSNVTVLPSIFWHNLSLRQHAFDSEDEKMMSDEQKMDLKFGDLHDFVADFDLQDFDYIVVPVNEWEHWSLAVICHPFTAQARTVIFDSQLTADLNNLQNMATLIESFMKYSYEKRTGNAMPFPLPCILPQRMPQQTNNFDCGIFIAEFARRFLLSPPKDLDNFDFAREYPDFSTATKRTEMQRVVLSLSTNRARWRPLVELLNGYSTAAPHRAL.

The tract at residues 46–106 is disordered; sequence GTHLDGSIGE…DNDEWTNQKR (61 aa). Residues 84–100 show a composition bias toward acidic residues; the sequence is DLVDEDEEEEDEEDNDE.

This sequence belongs to the peptidase C48 family. In terms of tissue distribution, expressed in hermaphrodite-specific neurons, head muscles, body wall muscles and pharyngeal cells.

The protein resides in the cytoplasm. It localises to the cytoskeleton. The protein localises to the microtubule organizing center. Its subcellular location is the centrosome. It is found in the nucleus. The protein resides in the mitochondrion matrix. It functions in the pathway protein modification; protein sumoylation. Its function is as follows. Protease required for deconjugation of smo-1 conjugates from target proteins which is necessary for cell cycle progression. Required for respiration and the maintenance of normal mitochondrial homeostasis. In response to mitochondrial stress, required for the removal of smo-1 conjugates from the transcription factor dve-1, which promotes the translocation of dve-1 from the cytosol to the nucleus to initiate the mitochondrial unfolded protein response. Furthermore, removes the smo-1 conjugates from the transcription factor atfs-1 to promote its stability and activate the mitochondrial unfolded protein response. Also plays a role in promoting mitochondrial unfolded protein response-mediated innate immunity following infection with P.aeruginosa. This chain is Ubiquitin-like protease 4, found in Caenorhabditis elegans.